The sequence spans 1475 residues: Protein Shroom4 (1475 aa).

In terms of domain architecture, PDZ spans 10–92; that stretch reads YVPVQLQGGA…ILKLIVRRRN (83 aa). Disordered stretches follow at residues 151–175 and 202–321; these read EKSS…GHLL and CALS…PPRS. Residues 249-258 show a composition bias toward polar residues; that stretch reads TSTSHASSYS. The span at 294–312 shows a compositional bias: basic and acidic residues; the sequence is EQHRASEPVDSLPQKEKPG. Ser-412 bears the Phosphoserine mark. Disordered stretches follow at residues 432-523, 542-577, 610-644, and 658-688; these read SKGM…PSAT, HTEA…NRRR, NEAV…SPGD, and SECL…GQSS. The span at 471-485 shows a compositional bias: basic and acidic residues; it reads QTRKERKTTPLDDKL. Polar residues predominate over residues 513–523; the sequence is SDLTSQQPSAT. The segment covering 542–557 has biased composition (basic and acidic residues); the sequence is HTEASEEGDNEPKECG. Positions 558 to 568 are enriched in gly residues; sequence RLGGRRSGGPR. Low complexity-rich tracts occupy residues 624 to 635 and 658 to 667; these read PLSASNASLLPS and SECLSQASES. Ser-722 is subject to Phosphoserine. Polar residues-rich tracts occupy residues 727-738 and 775-791; these read AQPQVALSTEAP and KSLS…HNNK. Disordered regions lie at residues 727-753 and 772-791; these read AQPQ…STPQ and ESSK…HNNK. At Ser-1010 the chain carries Phosphoserine. 2 disordered regions span residues 1022–1041 and 1055–1185; these read SNKP…ASMP and SLEP…QSLQ. The segment covering 1090 to 1099 has biased composition (pro residues); that stretch reads FPPPRPPPPN. Over residues 1110–1125 the composition is skewed to low complexity; it reads QLQQQQQQQQQQQQQQ. Residues 1128–1145 are compositionally biased toward acidic residues; sequence EEEEEKEQEEEGEKEEDL. Residues 1149-1168 show a composition bias toward polar residues; the sequence is YFSSELTGSCAPNTEEQPQS. In terms of domain architecture, ASD2 spans 1190–1469; that stretch reads FALHPSNFVP…QLKCLKESLH (280 aa). Residues 1380-1470 are a coiled coil; the sequence is SESNQEKLVL…LKCLKESLHL (91 aa).

The protein belongs to the shroom family. Interacts directly with F-actin. In terms of tissue distribution, detected in most adult tissues examined. Expressed in brain, lung, heart, liver, kidney, muscle and ovary. Expressed throughout the brain, with high expression in the brain stem and cerebellum and weaker expression in the hypothalamus, the hippocampus and the olfactory bulb. Expressed in wide range of cell types during development, including vascular endothelium and the polarized epithelium of the neural tube and kidney.

The protein localises to the cytoplasm. Its subcellular location is the cytoskeleton. In terms of biological role, probable regulator of cytoskeletal architecture that plays an important role in development. May regulate cellular and cytoskeletal architecture by modulating the spatial distribution of myosin II. In Mus musculus (Mouse), this protein is Protein Shroom4 (Shroom4).